Here is a 77-residue protein sequence, read N- to C-terminus: Sec-independent protein translocase protein TatA (77 aa).

A helical transmembrane segment spans residues 1-21 (MGSFSIWHWLIVLVIVMLVFG). Residues 40–77 (KDGMKEGNTDEPATPTPAKELRDSTTIDVEAKEKSRQQ) form a disordered region. Basic and acidic residues predominate over residues 58-77 (KELRDSTTIDVEAKEKSRQQ).

It belongs to the TatA/E family. As to quaternary structure, the Tat system comprises two distinct complexes: a TatABC complex, containing multiple copies of TatA, TatB and TatC subunits, and a separate TatA complex, containing only TatA subunits. Substrates initially bind to the TatABC complex, which probably triggers association of the separate TatA complex to form the active translocon.

It is found in the cell inner membrane. Its function is as follows. Part of the twin-arginine translocation (Tat) system that transports large folded proteins containing a characteristic twin-arginine motif in their signal peptide across membranes. TatA could form the protein-conducting channel of the Tat system. This chain is Sec-independent protein translocase protein TatA, found in Cupriavidus metallidurans (strain ATCC 43123 / DSM 2839 / NBRC 102507 / CH34) (Ralstonia metallidurans).